Reading from the N-terminus, the 474-residue chain is 2-succinylbenzoate--CoA ligase (474 aa).

Belongs to the ATP-dependent AMP-binding enzyme family. MenE subfamily.

It carries out the reaction 2-succinylbenzoate + ATP + CoA = 2-succinylbenzoyl-CoA + AMP + diphosphate. The protein operates within quinol/quinone metabolism; 1,4-dihydroxy-2-naphthoate biosynthesis; 1,4-dihydroxy-2-naphthoate from chorismate: step 5/7. It functions in the pathway quinol/quinone metabolism; menaquinone biosynthesis. In terms of biological role, converts 2-succinylbenzoate (OSB) to 2-succinylbenzoyl-CoA (OSB-CoA). The protein is 2-succinylbenzoate--CoA ligase of Staphylococcus epidermidis (strain ATCC 35984 / DSM 28319 / BCRC 17069 / CCUG 31568 / BM 3577 / RP62A).